The following is a 274-amino-acid chain: Small ribosomal subunit protein uS3 (274 aa).

The region spanning 38–106 is the KH type-2 domain; it reads IRRLLSSGLE…QVQLNILEVK (69 aa). Residues 215–274 form a disordered region; that stretch reads AAAAPAGADRPRRERPSGTRPRRSGASGTTATGTDAGRAAGGEEAAPDAAAPVEAQSTES. The segment covering 238-266 has biased composition (low complexity); the sequence is SGASGTTATGTDAGRAAGGEEAAPDAAAP.

It belongs to the universal ribosomal protein uS3 family. In terms of assembly, part of the 30S ribosomal subunit. Forms a tight complex with proteins S10 and S14.

Binds the lower part of the 30S subunit head. Binds mRNA in the 70S ribosome, positioning it for translation. The protein is Small ribosomal subunit protein uS3 of Mycobacterium tuberculosis (strain ATCC 25177 / H37Ra).